Reading from the N-terminus, the 214-residue chain is Phosphatidylcholine transfer protein (214 aa).

The residue at position 1 (Met-1) is an N-acetylmethionine. Residues Met-1–Lys-212 form the START domain. 2 residues coordinate a 1,2-diacyl-sn-glycero-3-phosphocholine: Tyr-72 and Arg-78. At Ser-139 the chain carries Phosphoserine. Gln-157 contacts a 1,2-diacyl-sn-glycero-3-phosphocholine.

In terms of assembly, interacts with ACOT13/THEM2. As to expression, abundant in liver of pups but levels in liver decrease 10-fold about 2 weeks after birth. In adult, highly expressed in epididymis, testis, kidney and bone-marrow derived mast cells.

It is found in the cytoplasm. Its function is as follows. Catalyzes the transfer of phosphatidylcholine between membranes. Binds a single lipid molecule. The protein is Phosphatidylcholine transfer protein (Pctp) of Mus musculus (Mouse).